The chain runs to 98 residues: Large ribosomal subunit protein uL23 (98 aa).

Belongs to the universal ribosomal protein uL23 family. As to quaternary structure, part of the 50S ribosomal subunit. Contacts protein L29, and trigger factor when it is bound to the ribosome.

Functionally, one of the early assembly proteins it binds 23S rRNA. One of the proteins that surrounds the polypeptide exit tunnel on the outside of the ribosome. Forms the main docking site for trigger factor binding to the ribosome. In Maricaulis maris (strain MCS10) (Caulobacter maris), this protein is Large ribosomal subunit protein uL23.